A 274-amino-acid polypeptide reads, in one-letter code: Penicillin-insensitive murein endopeptidase (274 aa).

An N-terminal signal peptide occupies residues 1-19 (MKKTALALLALLVSSASLA). 3 cysteine pairs are disulfide-bonded: C44-C265, C187-C235, and C216-C223. H110, H113, D120, D147, H150, and H211 together coordinate Zn(2+). The interval 225 to 274 (DQPLPPPGDGCGAELQSWFEPPEPGTTKPEKKTPPPLPPSCQALLDEHVL) is disordered.

This sequence belongs to the peptidase M74 family. Dimer. Zn(2+) serves as cofactor.

The protein resides in the periplasm. In terms of biological role, murein endopeptidase that cleaves the D-alanyl-meso-2,6-diamino-pimelyl amide bond that connects peptidoglycan strands. Likely plays a role in the removal of murein from the sacculus. The protein is Penicillin-insensitive murein endopeptidase of Citrobacter koseri (strain ATCC BAA-895 / CDC 4225-83 / SGSC4696).